Consider the following 224-residue polypeptide: Claudin-19 (224 aa).

Residues 1-7 lie on the Cytoplasmic side of the membrane; the sequence is MANSGLQ. A helical membrane pass occupies residues 8–28; sequence LLGYFLALGGWVGIIASTALP. At 29–81 the chain is on the extracellular side; the sequence is QWKQSSYAGDAIITAVGLYEGLWMSCASQSTGQVQCKLYDSLLALDGHIQSAR. Cysteines 54 and 64 form a disulfide. A helical membrane pass occupies residues 82–102; sequence ALMVVAVLLGFVAMVLSVVGM. Topologically, residues 103–117 are cytoplasmic; it reads KCTRVGDSNPIAKGR. Residues 118–138 form a helical membrane-spanning segment; sequence VAIAGGALFILAGLCTLTAVS. Topologically, residues 139–160 are extracellular; sequence WYATLVTQEFFNPSTPVNARYE. Residues 161–181 traverse the membrane as a helical segment; that stretch reads FGPALFVGWASAGLAVLGGSF. Residues 182–224 lie on the Cytoplasmic side of the membrane; it reads LCCTCPEPERPNSSPQPYRPGPSAAAREPVVKLPASAKGPLGV. Positions 191–224 are disordered; the sequence is RPNSSPQPYRPGPSAAAREPVVKLPASAKGPLGV.

This sequence belongs to the claudin family. In terms of assembly, can form homo- and heteropolymeric tight junction strands. Interacts with other claudins including CLDN3, CLDN10, CLDN16 and CLDN18 with highest affinity for CLDN16. Interacts (via PDZ-binding motif TRV) with TJP1 (via PDZ domain).

Its subcellular location is the cell junction. The protein localises to the tight junction. It is found in the cell membrane. It catalyses the reaction Mg(2+)(in) = Mg(2+)(out). It carries out the reaction Ca(2+)(in) = Ca(2+)(out). The enzyme catalyses Na(+)(in) = Na(+)(out). The catalysed reaction is K(+)(in) = K(+)(out). It catalyses the reaction Rb(+)(in) = Rb(+)(out). It carries out the reaction Cs(+)(in) = Cs(+)(out). The enzyme catalyses Li(+)(in) = Li(+)(out). In terms of biological role, forms paracellular channels: coassembles with CLDN16 into tight junction strands with cation-selective channels through the strands, conveying epithelial permeability in a process known as paracellular tight junction permeability. Involved in the maintenance of ion gradients along the nephron. In the thick ascending limb (TAL) of Henle's loop, facilitates sodium paracellular permeability from the interstitial compartment to the lumen, contributing to the lumen-positive transepithelial potential that drives paracellular magnesium and calcium reabsorption. Forms paracellular barriers on its own. In the peripheral nervous system, represents a major constituent of the tight junctions in Schwann cells and contributes to electrical sealing. During retinal neurogenesis, may regulate the barrier properties of tight junctions in retinal pigment epithelium, required for proper retinal tissue differentiation and vision. The protein is Claudin-19 of Homo sapiens (Human).